The primary structure comprises 195 residues: 7-methyl-GTP pyrophosphatase (195 aa).

The active-site Proton acceptor is the Asp-70.

The protein belongs to the Maf family. YceF subfamily. It depends on a divalent metal cation as a cofactor.

It is found in the cytoplasm. The enzyme catalyses N(7)-methyl-GTP + H2O = N(7)-methyl-GMP + diphosphate + H(+). Its function is as follows. Nucleoside triphosphate pyrophosphatase that hydrolyzes 7-methyl-GTP (m(7)GTP). May have a dual role in cell division arrest and in preventing the incorporation of modified nucleotides into cellular nucleic acids. The protein is 7-methyl-GTP pyrophosphatase of Shewanella sp. (strain MR-7).